Reading from the N-terminus, the 123-residue chain is Small ribosomal subunit protein uS12 (123 aa).

Asp-89 is modified (3-methylthioaspartic acid). Residues 104–123 (TQGVKDRRQRRSKYGAKRPK) form a disordered region. Residues 110–123 (RRQRRSKYGAKRPK) show a composition bias toward basic residues.

Belongs to the universal ribosomal protein uS12 family. As to quaternary structure, part of the 30S ribosomal subunit. Contacts proteins S8 and S17. May interact with IF1 in the 30S initiation complex.

With S4 and S5 plays an important role in translational accuracy. In terms of biological role, interacts with and stabilizes bases of the 16S rRNA that are involved in tRNA selection in the A site and with the mRNA backbone. Located at the interface of the 30S and 50S subunits, it traverses the body of the 30S subunit contacting proteins on the other side and probably holding the rRNA structure together. The combined cluster of proteins S8, S12 and S17 appears to hold together the shoulder and platform of the 30S subunit. The sequence is that of Small ribosomal subunit protein uS12 from Parvibaculum lavamentivorans (strain DS-1 / DSM 13023 / NCIMB 13966).